We begin with the raw amino-acid sequence, 425 residues long: Alpha-muurolene synthase (425 aa).

Mg(2+)-binding residues include Asp97, Asp101, Asn240, Ser244, and Glu248. The DDXXD motif signature appears at 97 to 101 (DNISD). Residues 348–382 (VAPPPPPPPPTPPPQSSDADTKKQKVKAQDGKGPV) are disordered. The segment covering 349–362 (APPPPPPPPTPPPQ) has biased composition (pro residues). The segment covering 366–377 (ADTKKQKVKAQD) has biased composition (basic and acidic residues).

It belongs to the terpene synthase family. Mg(2+) is required as a cofactor.

It catalyses the reaction (2E,6E)-farnesyl diphosphate = alpha-muurolene + diphosphate. It carries out the reaction (2E,6E)-farnesyl diphosphate = gamma-muurolene + diphosphate. The catalysed reaction is (2E,6E)-farnesyl diphosphate = (+)-(R)-germacrene A + diphosphate. In terms of biological role, sesquiterpene synthase that catalyzes the formation of alpha-muurolene, and at lower level (+)-(R)-germacrene A and gamma-muurolene. The polypeptide is Alpha-muurolene synthase (COP3) (Coprinopsis cinerea (strain Okayama-7 / 130 / ATCC MYA-4618 / FGSC 9003) (Inky cap fungus)).